A 95-amino-acid polypeptide reads, in one-letter code: Glutamyl-tRNA(Gln) amidotransferase subunit C (95 aa).

The protein belongs to the GatC family. In terms of assembly, heterotrimer of A, B and C subunits.

It carries out the reaction L-glutamyl-tRNA(Gln) + L-glutamine + ATP + H2O = L-glutaminyl-tRNA(Gln) + L-glutamate + ADP + phosphate + H(+). The enzyme catalyses L-aspartyl-tRNA(Asn) + L-glutamine + ATP + H2O = L-asparaginyl-tRNA(Asn) + L-glutamate + ADP + phosphate + 2 H(+). In terms of biological role, allows the formation of correctly charged Asn-tRNA(Asn) or Gln-tRNA(Gln) through the transamidation of misacylated Asp-tRNA(Asn) or Glu-tRNA(Gln) in organisms which lack either or both of asparaginyl-tRNA or glutaminyl-tRNA synthetases. The reaction takes place in the presence of glutamine and ATP through an activated phospho-Asp-tRNA(Asn) or phospho-Glu-tRNA(Gln). In Mesorhizobium japonicum (strain LMG 29417 / CECT 9101 / MAFF 303099) (Mesorhizobium loti (strain MAFF 303099)), this protein is Glutamyl-tRNA(Gln) amidotransferase subunit C.